The primary structure comprises 397 residues: MAIRIKLKPGRERSLERRHPWIFSNGIHNVNGGKPQAGDTVEVVAHDGHWLGRGAWSPESQIQVRIWTFDKEETIDADFFARRIKRAQAGRDDLIREQGLTGYRLIAAESDGLPGITIDRYANVLVCQLLSTGAEKWRDTIVEQLVLQYPDCAVYERSDVDSRKKEGLVPVVGLLHGELPAMPVIIEENGIKIAVDVVKGHKTGFYLDQRDNRAMAARFVKGKSVLNCFCYTGTFGLYAAKAGAASIENVDVSTLALQTARDNMAINNLNDDHVNYNEADVFKLLRQYRDEGKTFDVIVLDPPKFADNKSQLDGACRGYKDINMIAMQLLNPGGILLTFSCSGLMQSDLFQKVVADAALDAKREVQFIERMHQASDHPISSAFPEGYYLKGLVARVW.

The region spanning 2–80 (AIRIKLKPGR…KEETIDADFF (79 aa)) is the PUA domain.

This sequence belongs to the methyltransferase superfamily. RlmI family.

Its subcellular location is the cytoplasm. The catalysed reaction is cytidine(1962) in 23S rRNA + S-adenosyl-L-methionine = 5-methylcytidine(1962) in 23S rRNA + S-adenosyl-L-homocysteine + H(+). Specifically methylates the cytosine at position 1962 (m5C1962) of 23S rRNA. The sequence is that of Ribosomal RNA large subunit methyltransferase I from Shewanella frigidimarina (strain NCIMB 400).